Reading from the N-terminus, the 48-residue chain is uncharacterized protein (48 aa).

The tract at residues 1-48 (MLFCNNNNNNNNNNNNNNNNNNNNNNNNNNNNNNNNNNNSSNNNNFSR) is disordered.

This is an uncharacterized protein from Dictyostelium discoideum (Social amoeba).